The primary structure comprises 412 residues: Argininosuccinate synthase (412 aa).

ATP is bound by residues 24-32 and Ala50; that span reads AFSGGLDTS. Tyr103 and Ser108 together coordinate L-citrulline. Gly132 serves as a coordination point for ATP. Thr134, Asn138, and Asp139 together coordinate L-aspartate. Asn138 serves as a coordination point for L-citrulline. Arg142 contributes to the L-citrulline binding site.

It belongs to the argininosuccinate synthase family. Type 1 subfamily. In terms of assembly, homotetramer.

The protein localises to the cytoplasm. It carries out the reaction L-citrulline + L-aspartate + ATP = 2-(N(omega)-L-arginino)succinate + AMP + diphosphate + H(+). It participates in amino-acid biosynthesis; L-arginine biosynthesis; L-arginine from L-ornithine and carbamoyl phosphate: step 2/3. The polypeptide is Argininosuccinate synthase (Xanthomonas axonopodis pv. citri (strain 306)).